Reading from the N-terminus, the 96-residue chain is Nucleoid-associated protein TC_0612 (96 aa).

Belongs to the YbaB/EbfC family. In terms of assembly, homodimer.

It localises to the cytoplasm. It is found in the nucleoid. Binds to DNA and alters its conformation. May be involved in regulation of gene expression, nucleoid organization and DNA protection. This chain is Nucleoid-associated protein TC_0612, found in Chlamydia muridarum (strain MoPn / Nigg).